The chain runs to 367 residues: 3-dehydroquinate synthase (367 aa).

Residues 69 to 74, 103 to 107, 127 to 128, lysine 140, and lysine 149 contribute to the NAD(+) site; these read DGEAFK, GVIGD, and TT. Zn(2+) is bound by residues glutamate 182, histidine 245, and histidine 262.

Belongs to the sugar phosphate cyclases superfamily. Dehydroquinate synthase family. Co(2+) is required as a cofactor. Requires Zn(2+) as cofactor. It depends on NAD(+) as a cofactor.

It is found in the cytoplasm. It catalyses the reaction 7-phospho-2-dehydro-3-deoxy-D-arabino-heptonate = 3-dehydroquinate + phosphate. Its pathway is metabolic intermediate biosynthesis; chorismate biosynthesis; chorismate from D-erythrose 4-phosphate and phosphoenolpyruvate: step 2/7. Its function is as follows. Catalyzes the conversion of 3-deoxy-D-arabino-heptulosonate 7-phosphate (DAHP) to dehydroquinate (DHQ). The protein is 3-dehydroquinate synthase of Pseudomonas syringae pv. syringae (strain B728a).